Consider the following 248-residue polypeptide: Probable septum site-determining protein MinC (248 aa).

Residues 94–126 (GMPPAMRGGQPAADFEAPAGEPQANPGAPEPQI) are disordered.

It belongs to the MinC family. Interacts with MinD and FtsZ.

Cell division inhibitor that blocks the formation of polar Z ring septums. Rapidly oscillates between the poles of the cell to destabilize FtsZ filaments that have formed before they mature into polar Z rings. Prevents FtsZ polymerization. This Brucella suis biovar 1 (strain 1330) protein is Probable septum site-determining protein MinC.